We begin with the raw amino-acid sequence, 268 residues long: uncharacterized protein (268 aa).

It belongs to the LarE family.

This is an uncharacterized protein from Synechocystis sp. (strain ATCC 27184 / PCC 6803 / Kazusa).